Reading from the N-terminus, the 767-residue chain is Cadherin-5 (767 aa).

The signal sequence occupies residues 1-29; that stretch reads MMKQCARRQMTEPVFRVAVLLALCSLSIG. Residues 30 to 51 constitute a propeptide that is removed on maturation; that stretch reads VDVHQAQKTPSISSAALQRHKR. Over 30 to 593 the chain is Extracellular; the sequence is VDVHQAQKTP…SYARTGMSVS (564 aa). Ca(2+) contacts are provided by E62, E63, D113, and E115. 5 consecutive Cadherin domains span residues 86–155, 155–261, 262–373, 374–475, and 475–581; these read RYIL…IPVF, FDSD…IATF, KKER…PPIF, NQTE…APEL, and LTNG…RVEY. The N-linked (GlcNAc...) asparagine glycan is linked to N121. D147, I148, N149, D150, N151, D180, and D182 together coordinate Ca(2+). The N-linked (GlcNAc...) asparagine glycan is linked to N197. D233 is a binding site for Ca(2+). N-linked (GlcNAc...) asparagine glycans are attached at residues N374, N477, and N518. A helical membrane pass occupies residues 594 to 614; sequence ALLAILLCIITILVIVILIVL. The Cytoplasmic portion of the chain corresponds to 615 to 767; the sequence is RRRYQKEVLV…VDGSDSDSSY (153 aa).

The protein resides in the cell membrane. It localises to the cell junction. Its subcellular location is the adherens junction. Its function is as follows. Cadherins are calcium-dependent cell adhesion proteins. They preferentially interact with themselves in a homophilic manner in connecting cells; cadherins may thus contribute to the sorting of heterogeneous cell types. Required for embryonic cardiac looping and heart chamber development, via promotion of cell-cell junction formation and subsequent attachment between the endothelial and myocardial layers of the heart. Required for the directional migration and delamination of endothelial cell monolayers, by which common cardinal veins form via the lumen ensheathment mechanism of vessel development as they migrate and connect with the heart inflow tract. Required for the formation of filopodia extensions (sprouts) at the initiation of intersegmental vessel development, by acting (via its C-terminus) to facilitate anchoring of the actin cytoskeleton to cell junctions in endothelial cells. Then positively regulates dorsal migration of stalk cells and sprout outgrowth towards the dorsal longitudinal anastomotic vessels (DLAV) via endothelial cell elongation. Following contact with the DLAV, required for intersegmental vessel lumen formation, potentially via facilitating the formation and/or extension of endothelial cell tight junctions that are required during tubulogenesis. The protein is Cadherin-5 of Danio rerio (Zebrafish).